The following is a 437-amino-acid chain: Interactor protein for cytohesin exchange factors 1 (437 aa).

The 100-residue stretch at 41–140 folds into the PH domain; it reads HADCQGWLYK…WLNKLGSAVI (100 aa). Disordered stretches follow at residues 143–225 and 273–307; these read ESTT…PDTV and LSSDDTSSLSSNHDHLTVPDKPAGSKIMDKEETKV. Positions 151-162 are enriched in acidic residues; sequence CYSESEQEDPEI. Over residues 172–200 the composition is skewed to low complexity; sequence ASQTQSLTAQQASSSSPSLSGTSYSFSSL. Residues 201–214 show a composition bias toward polar residues; the sequence is ENTVKTPSSFPSSL. A compositionally biased stretch (low complexity) spans 273–283; sequence LSSDDTSSLSS. CRAC domain stretches follow at residues 315-320 and 339-348; these read KLYKSL and LRKSFVKRCK. The segment at 389–437 is required for interaction with CYTH2; the sequence is KYREWKVMNTLLIQDIYQQQRASPAPDDTDDTPQELKKSPSSPSVENSI. Residues 406–437 are disordered; it reads QQQRASPAPDDTDDTPQELKKSPSSPSVENSI. Ser411 is modified (phosphoserine). Residues 427–437 show a composition bias toward polar residues; that stretch reads SPSSPSVENSI.

In terms of assembly, interacts with guanine-nucleotide exchange factors PSCD1, PSCD2, PSCD3 and PSCD4. Interacts (via C-terminus) with cytohesin-2 CYTH2.

It is found in the cytoplasm. It localises to the cell membrane. Enhances the promotion of guanine-nucleotide exchange by PSCD2 on ARF6 in a concentration-dependent manner. This is Interactor protein for cytohesin exchange factors 1 (IPCEF1) from Homo sapiens (Human).